The chain runs to 463 residues: ATP-dependent protease ATPase subunit HslU (463 aa).

ATP contacts are provided by residues V21, 63-68 (GVGKTE), D276, E341, and R413.

The protein belongs to the ClpX chaperone family. HslU subfamily. As to quaternary structure, a double ring-shaped homohexamer of HslV is capped on each side by a ring-shaped HslU homohexamer. The assembly of the HslU/HslV complex is dependent on binding of ATP.

The protein resides in the cytoplasm. Functionally, ATPase subunit of a proteasome-like degradation complex; this subunit has chaperone activity. The binding of ATP and its subsequent hydrolysis by HslU are essential for unfolding of protein substrates subsequently hydrolyzed by HslV. HslU recognizes the N-terminal part of its protein substrates and unfolds these before they are guided to HslV for hydrolysis. The protein is ATP-dependent protease ATPase subunit HslU of Thermotoga petrophila (strain ATCC BAA-488 / DSM 13995 / JCM 10881 / RKU-1).